The following is a 265-amino-acid chain: Undecaprenyl-diphosphatase (265 aa).

7 helical membrane passes run 38–58, 75–95, 108–128, 135–155, 181–201, 215–235, and 244–264; these read RSDFFNIVIQAGAILAICLAL, RDYVLKVGVAFLVTAVVGLIV, PVAWALLIGGVWMLVAEHFAG, VVTWKVAIAVGLAQVVAGVFP, FVFMVGIPTMFAASGYALLEM, VAVAFVAATITGFVVVKWLLG, and VFAVYRMLLGAALLLWLPAAA.

This sequence belongs to the UppP family.

The protein resides in the cell inner membrane. The enzyme catalyses di-trans,octa-cis-undecaprenyl diphosphate + H2O = di-trans,octa-cis-undecaprenyl phosphate + phosphate + H(+). Functionally, catalyzes the dephosphorylation of undecaprenyl diphosphate (UPP). Confers resistance to bacitracin. This Xanthomonas axonopodis pv. citri (strain 306) protein is Undecaprenyl-diphosphatase.